The sequence spans 856 residues: MESEDLSGRELTIDSIMNKVRDIKNKFKNEDLTDELSLNKISADTTDNSGTVNQIMMMANSPEDWLSLLLKLEKNSVPLSDALLNKLIGRYSQAIEALPPDKYGQNESFARIQVRFAELKAIQEPDDARDYFQMARANCKKFAFVHISFAQFELSQGNVKKSKQLLQEAVERGAVPLEMLEIALRNLNLQKKQLLSEEEKKTLSASMVLTAQESFSSSLGHLQNRNNSCDSRGQTTKARFLYGENMPPQDAEIGYRNSLKQTNKTKQSCPFGRVPVNLLNSPDCDVKTDDSVVPCFIKRQTSRSECRDLVVAGSKPSGNDSCELRNLKSVQNINCKEPLVSDEKSSELIITDSVTLKNKTESSLRAKLEETKEYQEPEVPESNQKQWQSKRKSACINENPVASSNQWQIPELARKVNIEKHTTFEQPVFSVSKQSPPMSASKWFDPKSICKTPSSNTLDDYMSCFRTPVVKNDFPPACQLSTPYGQPACFQQQQQQIPATPLQNLQVLASSSANECISVKGRIYSILKQIGSGGSSKVFQVLNEKKQIYAIKFVNLEEADNQTLDSYRNEIAYLNKLQQHSDKIIRLYDYEITDQYIYMVMECGNIDLNSWLKKKKSIDPWERKSYWKNMLEAVHTIHQHGIVHSDLKPANFLIVDGMLKLIDFGIANQMQPDTTSIVKDSQVGTVNYMPPEAIKDMSSSRENGKSKSKISPKSDVWSLGCILYYMTYGKTPFQHIINQISKLHAIIDPNHEIEFPDIPEKDLQDVLKCCLKRDPKQRISIPELLAHPYVQIQTHPGNQMAKGTTEEMKYVLGQLVGLNSPNSILKAAKTLYEHYSGGESHNSSSSKTFGKKREKK.

Residue methionine 1 is modified to N-acetylmethionine. Position 7 is a phosphoserine (serine 7). A Phosphothreonine modification is found at threonine 33. Phosphoserine occurs at positions 37, 80, 281, 317, and 321. A Phosphothreonine modification is found at threonine 360. Serine 363 is subject to Phosphoserine. A disordered region spans residues 369-392 (EETKEYQEPEVPESNQKQWQSKRK). Phosphoserine is present on residues serine 393, serine 435, and serine 454. A Protein kinase domain is found at 524-790 (YSILKQIGSG…IPELLAHPYV (267 aa)). ATP contacts are provided by residues 530-538 (IGSGGSSKV) and lysine 552. Residue aspartate 646 is the Proton acceptor of the active site. A Phosphoserine modification is found at serine 820. Positions 835–846 (YSGGESHNSSSS) are enriched in low complexity. Residues 835-856 (YSGGESHNSSSSKTFGKKREKK) are disordered.

The protein belongs to the protein kinase superfamily. Ser/Thr protein kinase family. In terms of assembly, interacts with TPR; the interactions occurs in a microtubule-independent manner. Interacts with MAD1L1 and MAD2L1.

The catalysed reaction is L-seryl-[protein] + ATP = O-phospho-L-seryl-[protein] + ADP + H(+). It catalyses the reaction L-threonyl-[protein] + ATP = O-phospho-L-threonyl-[protein] + ADP + H(+). The enzyme catalyses L-tyrosyl-[protein] + ATP = O-phospho-L-tyrosyl-[protein] + ADP + H(+). Inhibited by the ATP-competitive kinase inhibitor, SP600125. Functionally, involved in mitotic spindle assembly checkpoint signaling, a process that delays anaphase until chromosomes are bioriented on the spindle, and in the repair of incorrect mitotic kinetochore-spindle microtubule attachments. Phosphorylates MAD1L1 to promote the mitotic spindle assembly checkpoint. Phosphorylates CDCA8/Borealin leading to enhanced AURKB activity at the kinetochore. Phosphorylates SKA3 at 'Ser-34' leading to dissociation of the SKA complex from microtubules and destabilization of microtubule-kinetochore attachments. Phosphorylates KNL1, KNTC1 and autophosphorylates. Phosphorylates MCRS1 which enhances recruitment of KIF2A to the minus end of spindle microtubules and promotes chromosome alignment. This chain is Dual specificity protein kinase TTK (TTK), found in Macaca fascicularis (Crab-eating macaque).